Consider the following 206-residue polypeptide: Small ribosomal subunit protein uS5 (206 aa).

Residues 1–42 (MENKTEVVVAENANNQTQPERKKFDRKPNRRPQGPKQFQKDD) are disordered. The region spanning 43-106 (FEEKVVTIRR…KEAKKNLIRV (64 aa)) is the S5 DRBM domain.

The protein belongs to the universal ribosomal protein uS5 family. In terms of assembly, part of the 30S ribosomal subunit. Contacts proteins S4 and S8.

Its function is as follows. With S4 and S12 plays an important role in translational accuracy. Located at the back of the 30S subunit body where it stabilizes the conformation of the head with respect to the body. The polypeptide is Small ribosomal subunit protein uS5 (Mesoplasma florum (strain ATCC 33453 / NBRC 100688 / NCTC 11704 / L1) (Acholeplasma florum)).